The sequence spans 850 residues: Translation initiation factor IF-2 (850 aa).

Disordered regions lie at residues 50–72 (LKSSHKSKAEEPRKITLQRKTTS) and 92–267 (FVQR…TGPV). Basic and acidic residues predominate over residues 96–135 (SPEEIQAEQKREQEERRAAENAAREKADADARQRNEEQAR). A compositionally biased stretch (low complexity) spans 136-172 (RQAAQAPAAAPVAKAEPAPAAAAPAAPAVPDAPVSED). Composition is skewed to basic and acidic residues over residues 173–210 (AAARAAERKKDEARRNESRTRDDDRRGGGVAGERRGEA) and 234–243 (TTDEESDGFR). Positions 244–257 (RGRGGKGKPKKRNQ) are enriched in basic residues. The 168-residue stretch at 350-517 (SRAPVVTVMG…AVLLQAEILE (168 aa)) folds into the tr-type G domain. The segment at 359-366 (GHVDHGKT) is G1. Position 359–366 (359–366 (GHVDHGKT)) interacts with GTP. The G2 stretch occupies residues 384–388 (GITQH). A G3 region spans residues 405 to 408 (DTPG). GTP is bound by residues 405–409 (DTPGH) and 459–462 (NKID). Residues 459–462 (NKID) are G4. Residues 495–497 (SAK) are G5.

It belongs to the TRAFAC class translation factor GTPase superfamily. Classic translation factor GTPase family. IF-2 subfamily.

The protein resides in the cytoplasm. In terms of biological role, one of the essential components for the initiation of protein synthesis. Protects formylmethionyl-tRNA from spontaneous hydrolysis and promotes its binding to the 30S ribosomal subunits. Also involved in the hydrolysis of GTP during the formation of the 70S ribosomal complex. The protein is Translation initiation factor IF-2 of Pseudomonas entomophila (strain L48).